The following is a 348-amino-acid chain: NADH-ubiquinone oxidoreductase chain 2 (348 aa).

Helical transmembrane passes span 1-21 (MNPY…TLTF), 25-45 (HWIL…PLMA), 60-80 (FLIQ…NAWI), 99-119 (MFAL…PEVL), 124-144 (LLTG…LIIQ), 151-171 (PLIL…SGLN), 178-197 (ILAY…IQYA), 202-224 (LIAL…VLSA), 239-259 (ILAA…PLTG), 274-294 (DLPA…FFYL), and 326-346 (LTIS…ILML).

It belongs to the complex I subunit 2 family. Core subunit of respiratory chain NADH dehydrogenase (Complex I) which is composed of 45 different subunits.

It localises to the mitochondrion inner membrane. It catalyses the reaction a ubiquinone + NADH + 5 H(+)(in) = a ubiquinol + NAD(+) + 4 H(+)(out). Functionally, core subunit of the mitochondrial membrane respiratory chain NADH dehydrogenase (Complex I) which catalyzes electron transfer from NADH through the respiratory chain, using ubiquinone as an electron acceptor. Essential for the catalytic activity and assembly of complex I. In Danio rerio (Zebrafish), this protein is NADH-ubiquinone oxidoreductase chain 2 (mt-nd2).